The following is a 756-amino-acid chain: Tubulin glycylase 3B (756 aa).

Residues 104–123 form a disordered region; the sequence is TPLPRTVTSSPTAPEAQKRQ. The TTL domain occupies 272 to 629; it reads LEERMAFIED…DLPKNPTAAT (358 aa). ATP contacts are provided by residues 440–443, lysine 453, and aspartate 455; that span reads QKYI. The disordered stretch occupies residues 709-736; that stretch reads ITKKKKLSASAGSSTAASAQPSTQNLTT. Positions 716–727 are enriched in low complexity; the sequence is SASAGSSTAASA.

The protein localises to the cytoplasm. The protein resides in the cytoskeleton. It localises to the nucleus. In terms of biological role, essential glycylase which modifies both tubulin and non-tubulin proteins, generating side chains of glycine on the gamma-carboxyl groups of specific glutamate residues of target proteins. Monoglycylates alpha-tubulin by adding a single glycine chain to generate monoglycine side chains, but is not involved in elongation step to generate polyglycine side chains on alpha-tubulin. Has the ability to both mono- and polyglycylate non-tubulin proteins such as up (Troponin T). Required for early steps of spermatogenesis. The chain is Tubulin glycylase 3B (TTLL3B) from Drosophila melanogaster (Fruit fly).